The chain runs to 54 residues: Toxin AnmTx Cj 1c-1 (54 aa).

The first 7 residues, 1–7, serve as a signal peptide directing secretion; it reads MLNKRGV. Disulfide bonds link cysteine 9–cysteine 50, cysteine 11–cysteine 41, and cysteine 33–cysteine 51. Position 53 is a glutamic acid 1-amide (glutamate 53).

Belongs to the sea anemone sodium channel inhibitory toxin family. Type I subfamily. Contains 3 disulfide bonds.

The protein localises to the secreted. It localises to the nematocyst. In vivo, induces marked paralysis on shrimps (C.multidentata) at 10-20 seconds after injection and a weak toxicity when injected into insect larvae (M.domestica). The sequence is that of Toxin AnmTx Cj 1c-1 from Epiactis japonica (Sea anemone).